The chain runs to 192 residues: Sarcoplasmic calcium-binding protein, beta chain (192 aa).

A1 carries the N-acetylalanine modification. 4 EF-hand domains span residues 4–39 (WDNR…VTLI), 56–91 (IMAN…NCKG), 100–135 (AFKV…RSAF), and 136–171 (ADVK…YAQF). 14 residues coordinate Ca(2+): D17, D19, D21, D28, D69, N71, D73, E75, E80, D113, D115, D117, M119, and E124.

In terms of assembly, SCPs from crayfish, lobster, and shrimp are polymorphic dimers; three isotypes (alpha-alpha, alpha-beta, and beta-beta) have been identified.

Its function is as follows. Like parvalbumins, SCPs seem to be more abundant in fast contracting muscles, but no functional relationship can be established from this distribution. The protein is Sarcoplasmic calcium-binding protein, beta chain of Penaeus sp. (Penoeid shrimp).